The chain runs to 124 residues: Small ribosomal subunit protein uS12 (124 aa).

2 disordered regions span residues 9–32 (RKGR…QRRG) and 105–124 (QGVK…KEKS). The segment covering 108–118 (KNRKQARSRYG) has biased composition (basic residues).

It belongs to the universal ribosomal protein uS12 family. Part of the 30S ribosomal subunit. Contacts proteins S8 and S17. May interact with IF1 in the 30S initiation complex.

With S4 and S5 plays an important role in translational accuracy. In terms of biological role, interacts with and stabilizes bases of the 16S rRNA that are involved in tRNA selection in the A site and with the mRNA backbone. Located at the interface of the 30S and 50S subunits, it traverses the body of the 30S subunit contacting proteins on the other side and probably holding the rRNA structure together. The combined cluster of proteins S8, S12 and S17 appears to hold together the shoulder and platform of the 30S subunit. This is Small ribosomal subunit protein uS12 from Nocardia farcinica (strain IFM 10152).